A 44-amino-acid chain; its full sequence is Photosystem I reaction center subunit IX (44 aa).

The helical transmembrane segment at 9–29 (FIRSAPVVAAVWLSLTAGIII) threads the bilayer.

This sequence belongs to the PsaJ family.

It localises to the cellular thylakoid membrane. In terms of biological role, may help in the organization of the PsaE and PsaF subunits. This Prochlorococcus marinus subsp. pastoris (strain CCMP1986 / NIES-2087 / MED4) protein is Photosystem I reaction center subunit IX.